The sequence spans 508 residues: Photosystem II CP47 reaction center protein (508 aa).

Helical transmembrane passes span 21–36, 101–115, 140–156, 203–218, 237–252, and 457–472; these read AVHL…WAGS, IILS…IWHW, GIHL…FGAF, IAAG…FHLS, VLSS…AFVV, and NFAL…HGSR.

This sequence belongs to the PsbB/PsbC family. PsbB subfamily. In terms of assembly, PSII is composed of 1 copy each of membrane proteins PsbA, PsbB, PsbC, PsbD, PsbE, PsbF, PsbH, PsbI, PsbJ, PsbK, PsbL, PsbM, PsbT, PsbX, PsbY, PsbZ, Psb30/Ycf12, at least 3 peripheral proteins of the oxygen-evolving complex and a large number of cofactors. It forms dimeric complexes. It depends on Binds multiple chlorophylls. PSII binds additional chlorophylls, carotenoids and specific lipids. as a cofactor.

Its subcellular location is the plastid. It is found in the chloroplast thylakoid membrane. Its function is as follows. One of the components of the core complex of photosystem II (PSII). It binds chlorophyll and helps catalyze the primary light-induced photochemical processes of PSII. PSII is a light-driven water:plastoquinone oxidoreductase, using light energy to abstract electrons from H(2)O, generating O(2) and a proton gradient subsequently used for ATP formation. The chain is Photosystem II CP47 reaction center protein from Staurastrum punctulatum (Green alga).